A 95-amino-acid chain; its full sequence is Aspartyl/glutamyl-tRNA(Asn/Gln) amidotransferase subunit C (95 aa).

Belongs to the GatC family. Heterotrimer of A, B and C subunits.

It carries out the reaction L-glutamyl-tRNA(Gln) + L-glutamine + ATP + H2O = L-glutaminyl-tRNA(Gln) + L-glutamate + ADP + phosphate + H(+). The enzyme catalyses L-aspartyl-tRNA(Asn) + L-glutamine + ATP + H2O = L-asparaginyl-tRNA(Asn) + L-glutamate + ADP + phosphate + 2 H(+). Allows the formation of correctly charged Asn-tRNA(Asn) or Gln-tRNA(Gln) through the transamidation of misacylated Asp-tRNA(Asn) or Glu-tRNA(Gln) in organisms which lack either or both of asparaginyl-tRNA or glutaminyl-tRNA synthetases. The reaction takes place in the presence of glutamine and ATP through an activated phospho-Asp-tRNA(Asn) or phospho-Glu-tRNA(Gln). The sequence is that of Aspartyl/glutamyl-tRNA(Asn/Gln) amidotransferase subunit C from Prosthecochloris aestuarii (strain DSM 271 / SK 413).